The primary structure comprises 858 residues: Elongation factor 2 (858 aa).

The 346-residue stretch at 17–362 (ANIRNMSVIA…MITIHLPSPV (346 aa)) folds into the tr-type G domain. Residue 26-33 (AHVDHGKS) coordinates GTP. The residue at position 54 (threonine 54) is a Phosphothreonine. Threonine 57 is subject to Phosphothreonine; by EEF2K. Threonine 59 is modified (phosphothreonine). Lysine 152 carries the post-translational modification N6-succinyllysine. Residues 158–161 (NKMD) and 216–218 (SGL) contribute to the GTP site. An N6-acetyllysine modification is found at lysine 235. At lysine 239 the chain carries N6-acetyllysine; alternate. Lysine 239 is covalently cross-linked (Glycyl lysine isopeptide (Lys-Gly) (interchain with G-Cter in SUMO1); alternate). A Phosphotyrosine; by CSK modification is found at tyrosine 265. N6-acetyllysine; alternate is present on lysine 272. An N6-succinyllysine; alternate modification is found at lysine 272. Residue lysine 275 is modified to N6-acetyllysine. Residue lysine 322 forms a Glycyl lysine isopeptide (Lys-Gly) (interchain with G-Cter in SUMO) linkage. Phosphoserine is present on serine 325. Position 373 is a phosphotyrosine; by CSK (tyrosine 373). At threonine 435 the chain carries Phosphothreonine. An N6-acetyllysine mark is found at lysine 439 and lysine 445. A Phosphoserine modification is found at serine 502. At lysine 525 the chain carries N6,N6,N6-trimethyllysine; by EEF2KMT. A Glycyl lysine isopeptide (Lys-Gly) (interchain with G-Cter in SUMO) cross-link involves residue lysine 529. Residue lysine 572 is modified to N6-succinyllysine. Serine 595 carries the post-translational modification Phosphoserine; by CDK2. Lysine 619 is subject to N6-acetyllysine. Diphthamide is present on histidine 715.

This sequence belongs to the TRAFAC class translation factor GTPase superfamily. Classic translation factor GTPase family. EF-G/EF-2 subfamily. Binds to 80S ribosomes. Actively translating ribosomes show mutually exclusive binding of eIF5a (EIF5A or EIF5A2) and EEF2/eEF2. Interacts with SERBP1; interaction sequesters EEF2/eEF2 at the A-site of the ribosome, thereby blocking the interaction sites of the mRNA-tRNA complex, promoting ribosome stabilization and hibernation. Interacts with HABP4; interaction takes place at the A-site of hibernating ribosomes and promotes ribosome stabilization. Component of the mRNA surveillance SURF complex, at least composed of ERF1, ERF3 (ERF3A or ERF3B), EEF2, UPF1/RENT1, SMG1, SMG8 and SMG9. Interacts with RBPMS2. Diphthamide is 2-[3-carboxyamido-3-(trimethyl-ammonio)propyl]histidine. In terms of processing, phosphorylation by EF-2 kinase completely inactivates EF-2; it requires prior phosphorylation by CDK2 at Ser-595 during mitotic prometaphase. Phosphorylation by CSK promotes SUMOylation, proteolytic cleavage, and nuclear translocation if the C-terminal fragment. Post-translationally, proteolytically processed at two sites following phosphorylation by CSK. SUMOylated following phosphorylation by CSK, promotes proteolytic cleavage. In terms of processing, ISGylated.

Its subcellular location is the cytoplasm. It localises to the nucleus. The enzyme catalyses GTP + H2O = GDP + phosphate + H(+). Its function is as follows. Catalyzes the GTP-dependent ribosomal translocation step during translation elongation. During this step, the ribosome changes from the pre-translocational (PRE) to the post-translocational (POST) state as the newly formed A-site-bound peptidyl-tRNA and P-site-bound deacylated tRNA move to the P and E sites, respectively. Catalyzes the coordinated movement of the two tRNA molecules, the mRNA and conformational changes in the ribosome. The sequence is that of Elongation factor 2 (Eef2) from Rattus norvegicus (Rat).